An 80-amino-acid polypeptide reads, in one-letter code: Exodeoxyribonuclease 7 small subunit (80 aa).

Belongs to the XseB family. As to quaternary structure, heterooligomer composed of large and small subunits.

It localises to the cytoplasm. It catalyses the reaction Exonucleolytic cleavage in either 5'- to 3'- or 3'- to 5'-direction to yield nucleoside 5'-phosphates.. Its function is as follows. Bidirectionally degrades single-stranded DNA into large acid-insoluble oligonucleotides, which are then degraded further into small acid-soluble oligonucleotides. In Escherichia coli O139:H28 (strain E24377A / ETEC), this protein is Exodeoxyribonuclease 7 small subunit.